A 378-amino-acid chain; its full sequence is Cyclic di-GMP phosphodiesterase response regulator RpfG (378 aa).

In terms of domain architecture, Response regulatory spans 29–147 (NIVIVDDQMS…ELRARCSNLL (119 aa)). D80 is subject to 4-aspartylphosphate. An HD-GYP domain is found at 174–371 (VEERERETLS…LEQICGQFST (198 aa)).

As to quaternary structure, interacts with a subset of GGDEF domain-containing proteins. Phosphorylated and activated by RpfC.

It localises to the cytoplasm. It catalyses the reaction 3',3'-c-di-GMP + 2 H2O = 2 GMP + 2 H(+). Member of the two-component regulatory system RpfG/RpfC, which is involved in the perception and response to the diffusible signaling factor (DSF), which is essential for cell-cell signaling. Detection of DSF leads to the positive regulation of biofilm dispersal and the production of virulence factors. Activated RpfG degrades cyclic di-GMP to GMP, leading to the activation of Clp, a global transcriptional regulator that regulates a large set of genes in DSF pathway. May also directly control genes involved in biofilm dispersal. This Xanthomonas campestris pv. campestris (strain 8004) protein is Cyclic di-GMP phosphodiesterase response regulator RpfG (rpfG).